A 482-amino-acid polypeptide reads, in one-letter code: Abscisic acid 8'-hydroxylase 2 (482 aa).

A helical transmembrane segment spans residues 20-40; sequence PALITLTIVVVVVVLLFKWWL. A heme-binding site is contributed by C431.

This sequence belongs to the cytochrome P450 family. The cofactor is heme. In terms of tissue distribution, mainly expressed in dry seeds. Lower expression in rosette leaves, flowers, siliques and stems. Not expressed in roots. Expressed in both endosperm and vascular tissues of embryo during the seed development and in cortex and endodermis in germinating embryo.

Its subcellular location is the membrane. It carries out the reaction 2-cis-(+)-abscisate + reduced [NADPH--hemoprotein reductase] + O2 = (+)-8'-hydroxyabscisate + oxidized [NADPH--hemoprotein reductase] + H2O + H(+). Its pathway is plant hormone degradation; abscisic acid degradation. Involved in the oxidative degradation of abscisic acid, but not in the isomerization of the produced 8'-hydroxyabscisic acid (8'-OH-ABA) to (-)-phaseic acid (PA). Involved in the control of seed dormancy and germination. In Arabidopsis thaliana (Mouse-ear cress), this protein is Abscisic acid 8'-hydroxylase 2 (CYP707A2).